Here is a 268-residue protein sequence, read N- to C-terminus: Tryptophan synthase alpha chain (268 aa).

Active-site proton acceptor residues include glutamate 49 and aspartate 60.

The protein belongs to the TrpA family. In terms of assembly, tetramer of two alpha and two beta chains.

The catalysed reaction is (1S,2R)-1-C-(indol-3-yl)glycerol 3-phosphate + L-serine = D-glyceraldehyde 3-phosphate + L-tryptophan + H2O. The protein operates within amino-acid biosynthesis; L-tryptophan biosynthesis; L-tryptophan from chorismate: step 5/5. Its function is as follows. The alpha subunit is responsible for the aldol cleavage of indoleglycerol phosphate to indole and glyceraldehyde 3-phosphate. The sequence is that of Tryptophan synthase alpha chain from Pectobacterium atrosepticum (strain SCRI 1043 / ATCC BAA-672) (Erwinia carotovora subsp. atroseptica).